Reading from the N-terminus, the 355-residue chain is Isopentenyl-diphosphate delta-isomerase (355 aa).

Substrate is bound at residue 12–13 (RK). Residues Ser-70, 71 to 73 (SMT), Ser-101, and Asn-130 each bind FMN. 101–103 (SMR) lines the substrate pocket. Substrate is bound at residue Gln-165. Glu-166 contacts Mg(2+). Residues Lys-197 and 308 to 309 (AG) contribute to the FMN site.

Belongs to the IPP isomerase type 2 family. As to quaternary structure, homooctamer. Dimer of tetramers. FMN is required as a cofactor. NADPH serves as cofactor. The cofactor is Mg(2+).

The protein localises to the cytoplasm. It catalyses the reaction isopentenyl diphosphate = dimethylallyl diphosphate. Its function is as follows. Involved in the biosynthesis of isoprenoids. Catalyzes the 1,3-allylic rearrangement of the homoallylic substrate isopentenyl (IPP) to its allylic isomer, dimethylallyl diphosphate (DMAPP). The polypeptide is Isopentenyl-diphosphate delta-isomerase (Chlorobium phaeovibrioides (strain DSM 265 / 1930) (Prosthecochloris vibrioformis (strain DSM 265))).